The sequence spans 552 residues: CTP synthase (552 aa).

Positions 1-265 (MTKFVFVTGG…DRIVCEKLAL (265 aa)) are amidoligase domain. Ser-13 contacts CTP. Residue Ser-13 participates in UTP binding. ATP is bound by residues 14 to 19 (SLGKGI) and Asp-71. Residues Asp-71 and Glu-139 each coordinate Mg(2+). CTP is bound by residues 146–148 (DIE), 186–191 (KTKPTQ), and Lys-222. UTP is bound by residues 186–191 (KTKPTQ) and Lys-222. The region spanning 290 to 545 (TIGMVGKYVD…IKAALAHKQA (256 aa)) is the Glutamine amidotransferase type-1 domain. Gly-351 lines the L-glutamine pocket. The Nucleophile; for glutamine hydrolysis role is filled by Cys-378. Residues 379 to 382 (LGMQ), Glu-402, and Arg-468 each bind L-glutamine. Residues His-518 and Glu-520 contribute to the active site.

It belongs to the CTP synthase family. As to quaternary structure, homotetramer.

It catalyses the reaction UTP + L-glutamine + ATP + H2O = CTP + L-glutamate + ADP + phosphate + 2 H(+). The enzyme catalyses L-glutamine + H2O = L-glutamate + NH4(+). The catalysed reaction is UTP + NH4(+) + ATP = CTP + ADP + phosphate + 2 H(+). Its pathway is pyrimidine metabolism; CTP biosynthesis via de novo pathway; CTP from UDP: step 2/2. With respect to regulation, allosterically activated by GTP, when glutamine is the substrate; GTP has no effect on the reaction when ammonia is the substrate. The allosteric effector GTP functions by stabilizing the protein conformation that binds the tetrahedral intermediate(s) formed during glutamine hydrolysis. Inhibited by the product CTP, via allosteric rather than competitive inhibition. Catalyzes the ATP-dependent amination of UTP to CTP with either L-glutamine or ammonia as the source of nitrogen. Regulates intracellular CTP levels through interactions with the four ribonucleotide triphosphates. In Herminiimonas arsenicoxydans, this protein is CTP synthase.